A 284-amino-acid chain; its full sequence is L-fucose dehydrogenase (284 aa).

12 residues coordinate NAD(+): arginine 19, isoleucine 21, aspartate 40, lysine 41, aspartate 62, valine 63, asparagine 89, tyrosine 154, lysine 158, isoleucine 187, threonine 189, and leucine 191.

Belongs to the short-chain dehydrogenases/reductases (SDR) family.

It carries out the reaction L-fucose + NAD(+) = L-fucono-1,5-lactone + NADH + H(+). The enzyme catalyses D-arabinose + NAD(+) = D-arabinono-1,5-lactone + NADH + H(+). The catalysed reaction is L-galactose + NAD(+) = L-galactono-1,5-lactone + NADH + H(+). It participates in carbohydrate degradation; L-fucose degradation. Functionally, catalyzes the NAD(+)-dependent oxidation of L-fucose, yielding L-fucono-1,5-lactone, which rapidly converts spontaneously to L-fucone-1,4-lactone. Can also act on D-arabinose and L-galactose, with lower catalytic efficiency. Does not use NADPH. May be the initial enzyme of the putative L-fucose degradation pathway in mammals. The protein is L-fucose dehydrogenase (HSD17B14) of Oryctolagus cuniculus (Rabbit).